The chain runs to 342 residues: MADTATTASAASAAASASNASSDAPPFQLGKPRFQQTSFYGRFRHFLDIIDPRTLFVTEKRLREAVQLLEDYKHGTLRPGVTNEQLWSAQKIKQAILHPDTNEKIFMPFRMSGYIPFGTPIVVGLLLPNQTLASTVFWQWLNQSHNACVNYANRNATKPSPASKFIQGYLGAVISAVSIAVGLNVLVQKANKFTPATRLLVQRFVPFPAVASANICNVVLMRYGELEEGIDVLDADGNLVGSSKIAARHALLETALTRVVLPMPILVLPPIVMSMLEKTALLQARPRLLLPVHSLVCLAAFGLALPLAISLFPQMSEIETSQLEPEIARATSSRTVVYNKGL.

The span at 1–24 (MADTATTASAASAAASASNASSDA) shows a compositional bias: low complexity. Residues 1 to 29 (MADTATTASAASAAASASNASSDAPPFQL) are disordered. Helical transmembrane passes span 105 to 125 (IFMP…VVGL), 165 to 185 (FIQG…GLNV), 256 to 276 (LTRV…MSML), and 289 to 309 (LLPV…PLAI).

This sequence belongs to the sideroflexin family. As to expression, specifically expressed in the brain.

The protein localises to the mitochondrion inner membrane. It catalyses the reaction citrate(in) = citrate(out). Functionally, mitochondrial amino-acid transporter. Transports citrate. Does not act as a serine transporter: not able to mediate transport of serine into mitochondria. In brown adipose tissue, plays a role in the regulation of UCP1-dependent thermogenesis probably by supporting mitochondrial glycerol-3-phosphate utilization. This chain is Sideroflexin-5, found in Rattus norvegicus (Rat).